A 289-amino-acid polypeptide reads, in one-letter code: Protoheme IX farnesyltransferase (289 aa).

Transmembrane regions (helical) follow at residues 9–29 (VALM…PVMM), 35–55 (MPSL…AGSA), 89–109 (LTFG…LVNW), 110–130 (PSAL…TLGL), 138–158 (IVIG…AVTG), 164–184 (AVLL…ALAM), 188–208 (DDYA…EVVT), 228–248 (VAHT…WFLA), and 269–289 (FHMS…TAVV).

The protein belongs to the UbiA prenyltransferase family. Protoheme IX farnesyltransferase subfamily.

Its subcellular location is the cell membrane. It carries out the reaction heme b + (2E,6E)-farnesyl diphosphate + H2O = Fe(II)-heme o + diphosphate. It participates in porphyrin-containing compound metabolism; heme O biosynthesis; heme O from protoheme: step 1/1. Functionally, converts heme B (protoheme IX) to heme O by substitution of the vinyl group on carbon 2 of heme B porphyrin ring with a hydroxyethyl farnesyl side group. The protein is Protoheme IX farnesyltransferase of Frankia alni (strain DSM 45986 / CECT 9034 / ACN14a).